The following is a 916-amino-acid chain: Protein translocase subunit SecA (916 aa).

ATP is bound by residues Gln87, 105 to 109 (GEGKT), and Asp507. Zn(2+) is bound by residues Cys900, Cys902, Cys911, and His912.

The protein belongs to the SecA family. In terms of assembly, monomer and homodimer. Part of the essential Sec protein translocation apparatus which comprises SecA, SecYEG and auxiliary proteins SecDF-YajC and YidC. Zn(2+) is required as a cofactor.

It localises to the cell inner membrane. The protein localises to the cytoplasm. It carries out the reaction ATP + H2O + cellular proteinSide 1 = ADP + phosphate + cellular proteinSide 2.. Its function is as follows. Part of the Sec protein translocase complex. Interacts with the SecYEG preprotein conducting channel. Has a central role in coupling the hydrolysis of ATP to the transfer of proteins into and across the cell membrane, serving both as a receptor for the preprotein-SecB complex and as an ATP-driven molecular motor driving the stepwise translocation of polypeptide chains across the membrane. The protein is Protein translocase subunit SecA of Neisseria meningitidis serogroup C / serotype 2a (strain ATCC 700532 / DSM 15464 / FAM18).